A 387-amino-acid polypeptide reads, in one-letter code: Probable WRKY transcription factor 36 (387 aa).

The WRKY DNA-binding region spans 197–264 (CEDPSINDGC…YEGNHDHPLP (68 aa)). Residues 322–366 (RPNYPNQLPDDYPLSSSSFSLNFSSPDPPPPSSHDHTLNFSGLRT) are disordered. Over residues 329–346 (LPDDYPLSSSSFSLNFSS) the composition is skewed to low complexity.

Its subcellular location is the nucleus. Transcription factor. Interacts specifically with the W box (5'-(T)TGAC[CT]-3'), a frequently occurring elicitor-responsive cis-acting element. The chain is Probable WRKY transcription factor 36 (WRKY36) from Arabidopsis thaliana (Mouse-ear cress).